Consider the following 196-residue polypeptide: Small ribosomal subunit protein uS4c (196 aa).

The tract at residues 16–36 (GTLPGLTSKRPKSGSDLKTQL) is disordered. Residues 89 to 150 (MRLDNILFRL…KQRSKALIQN (62 aa)) form the S4 RNA-binding domain.

It belongs to the universal ribosomal protein uS4 family. Part of the 30S ribosomal subunit. Contacts protein S5. The interaction surface between S4 and S5 is involved in control of translational fidelity.

It localises to the plastid. Its subcellular location is the chloroplast. Functionally, one of the primary rRNA binding proteins, it binds directly to 16S rRNA where it nucleates assembly of the body of the 30S subunit. With S5 and S12 plays an important role in translational accuracy. The protein is Small ribosomal subunit protein uS4c (rps4) of Rhapis humilis (Slender lady palm).